The chain runs to 78 residues: Large ribosomal subunit protein bL28 (78 aa).

Residues M1 to A21 are disordered. A compositionally biased stretch (polar residues) spans T8–A21.

The protein belongs to the bacterial ribosomal protein bL28 family.

The sequence is that of Large ribosomal subunit protein bL28 from Hahella chejuensis (strain KCTC 2396).